Consider the following 265-residue polypeptide: Cytochrome c oxidase subunit 3 (265 aa).

Transmembrane regions (helical) follow at residues 16 to 36 (PWPISGSLGALATTVGGVMYM), 41 to 61 (GGATLLSLGLIFLLYTMFVWW), 84 to 104 (YGSILFIVSEVMFLFAFFWAS), 137 to 157 (TPILLSSGAAVTWAHHAILAG), 162 to 182 (AVYALVATVSLAIVFTGFQGM), 200 to 220 (FYLATGFHGFHVIIGTLFSII), and 245 to 265 (WHFVDVVRLFLFVSIYWWGGI).

This sequence belongs to the cytochrome c oxidase subunit 3 family. Component of the cytochrome c oxidase (complex IV, CIV), a multisubunit enzyme composed of a catalytic core of 3 subunits and several supernumerary subunits. The complex exists as a monomer or a dimer and forms supercomplexes (SCs) in the inner mitochondrial membrane with ubiquinol-cytochrome c oxidoreductase (cytochrome b-c1 complex, complex III, CIII).

The protein resides in the mitochondrion inner membrane. It catalyses the reaction 4 Fe(II)-[cytochrome c] + O2 + 8 H(+)(in) = 4 Fe(III)-[cytochrome c] + 2 H2O + 4 H(+)(out). Component of the cytochrome c oxidase, the last enzyme in the mitochondrial electron transport chain which drives oxidative phosphorylation. The respiratory chain contains 3 multisubunit complexes succinate dehydrogenase (complex II, CII), ubiquinol-cytochrome c oxidoreductase (cytochrome b-c1 complex, complex III, CIII) and cytochrome c oxidase (complex IV, CIV), that cooperate to transfer electrons derived from NADH and succinate to molecular oxygen, creating an electrochemical gradient over the inner membrane that drives transmembrane transport and the ATP synthase. Cytochrome c oxidase is the component of the respiratory chain that catalyzes the reduction of oxygen to water. Electrons originating from reduced cytochrome c in the intermembrane space (IMS) are transferred via the dinuclear copper A center (CU(A)) of subunit 2 and heme A of subunit 1 to the active site in subunit 1, a binuclear center (BNC) formed by heme A3 and copper B (CU(B)). The BNC reduces molecular oxygen to 2 water molecules using 4 electrons from cytochrome c in the IMS and 4 protons from the mitochondrial matrix. This chain is Cytochrome c oxidase subunit 3 (COX3), found in Oenothera berteroana (Bertero's evening primrose).